The following is a 79-amino-acid chain: Sulfur carrier protein TusA (79 aa).

The active-site Cysteine persulfide intermediate is Cys-17.

Belongs to the sulfur carrier protein TusA family.

It localises to the cytoplasm. Sulfur carrier protein which probably makes part of a sulfur-relay system. The polypeptide is Sulfur carrier protein TusA (Pseudoalteromonas translucida (strain TAC 125)).